The sequence spans 478 residues: MAAESTRNSSPPSTSQSSSPIINLPDDHLLTILLLLPVDSILSFSMTCKRYKSLACSDSLWEALCEREWGPTSVDALKLSSLRDGFSWMLMFQRVYKMDSVCCHKISDPDDDDEESSSFPIPRASHSLNFVNDHLVLFGGGCQGGRHLDDTWTSYVDKSNQSILKWKKVKSGTPSGRFGHTCIVIGEYLLLFGGINDRGERLNDTWIGQVFCHEGLSWKLLNVGSLQRPRPPPRGAHSACCIAEKKMVVHGGIGLNGVRLGDTWILELSEDFSSGTWHMVESPQLPPPRSGHTLTCIRENQVVLFGGRGLGYDVLDDVWILDIQEPCEEKWIQIFYDFQDVPEYASLPRVGHSATLVLGGRILIYGGEDSYRHRKDDFWVLDVKTIPSSGLKPQGLSLNGSSVWKKLDRISYGPKSRSFHRACADCSGRFLYVFGGMVDGLLQPAASSGLRFDGELFMVELVLGFSDLDHQQRPGKSM.

The segment at 1 to 20 is disordered; sequence MAAESTRNSSPPSTSQSSSP. The span at 9–20 shows a compositional bias: low complexity; that stretch reads SSPPSTSQSSSP. The F-box domain occupies 18 to 64; the sequence is SSPIINLPDDHLLTILLLLPVDSILSFSMTCKRYKSLACSDSLWEAL. Kelch repeat units follow at residues 135–187 and 246–299; these read LVLF…VIGE and KMVV…CIRE.

The sequence is that of F-box/kelch-repeat protein At1g51550 from Arabidopsis thaliana (Mouse-ear cress).